Consider the following 2227-residue polypeptide: Genome polyprotein (2227 aa).

2 consecutive short sequence motifs ((L)YPX(n)L motif) follow at residues 167–171 (YPHGL) and 200–205 (YPVWEL). An involved in P1-2A pentamerization region spans residues 766–836 (MMSRIAAGDL…PRKMKGLFSQ (71 aa)). Residues 1010–1030 (VTVEIINTVLCFVKSGILLYV) traverse the membrane as a helical segment. The segment at 1043–1070 (IGLLRVMNYADIGCSVISCGKVFSKMLE) is membrane-penetrating ability. Residues 1127-1152 (KKKDVLNVLKDNQQKIERAIEEADNF) adopt a coiled-coil conformation. Residues 1204-1366 (HQKLKNLGSI…SFFKNPHNDM (163 aa)) enclose the SF3 helicase domain. 1230–1237 (GKRGGGKS) is a binding site for ATP. The helical transmembrane segment at 1462–1482 (WVAVGAAVGILGVLVGGWFVY) threads the bilayer. Position 1499 is an O-(5'-phospho-RNA)-tyrosine (Tyr-1499). The Peptidase C3 domain maps to 1514–1728 (DPVESQSTLE…VAKLVTQEMF (215 aa)). Active-site for protease 3C activity residues include His-1563, Asp-1603, and Cys-1691. A RdRp catalytic domain is found at 1976–2097 (DVGLDLDFSA…VFSRDIQIDN (122 aa)). The For RdRp activity role is filled by Asp-2083.

Belongs to the picornaviridae polyprotein family. As to quaternary structure, homodimer. Homomultimer; probably interacts with membranes in a multimeric form. Seems to assemble into amyloid-like fibers. In terms of assembly, homodimer. Monomer. Interacts with protein 3CD. Interacts with host ACBD3. As to quaternary structure, interacts with protein 3AB. In terms of assembly, interacts with human MAVS. Homodimer; disulfide-linked. As to quaternary structure, homopentamer. Homooligomer. In terms of assembly, interacts with capsid protein VP2. Interacts with capsid protein VP3. Interacts with capsid protein VP1. Interacts with capsid protein VP3. As to quaternary structure, interacts with capsid protein VP1. Interacts with capsid protein VP2. Post-translationally, specific enzymatic cleavages by viral protease in vivo yield a variety of precursors and mature proteins. Polyprotein processing intermediates are produced, such as P1-2A which is a functional precursor of the structural proteins, VP0 which is a VP4-VP2 precursor, VP1-2A precursor, 3ABC precursor which is a stable and catalytically active precursor of 3A, 3B and 3C proteins, 3AB and 3CD precursors. The assembly signal 2A is removed from VP1-2A by a host protease, possibly host Cathepsin L. This cleavage occurs over a region of 3 amino-acids probably generating VP1 proteins with heterogeneous C-termini. During virion maturation, immature virions are rendered infectious following cleavage of VP0 into VP4 and VP2. This maturation seems to be an autocatalytic event triggered by the presence of RNA in the capsid and is followed by a conformational change of the particle. In terms of processing, the assembly signal 2A is removed from VP1-2A by a host protease, possibly host Cathepsin L in naked virions. This cleavage does not occur in enveloped virions. This cleavage occurs over a region of 3 amino-acids probably generating VP1 proteins with heterogeneous C-termini. Post-translationally, VPg is uridylylated prior to priming replication into VPg-pUpU. Unlike other picornaviruses, does not seem to be myristoylated.

It localises to the virion. Its subcellular location is the host endosome. The protein localises to the host multivesicular body. It is found in the host membrane. The protein resides in the host mitochondrion outer membrane. It localises to the host cytoplasm. Its subcellular location is the host cytoplasmic vesicle membrane. It carries out the reaction RNA(n) + a ribonucleoside 5'-triphosphate = RNA(n+1) + diphosphate. The catalysed reaction is a ribonucleoside 5'-triphosphate + H2O = a ribonucleoside 5'-diphosphate + phosphate + H(+). The enzyme catalyses Selective cleavage of Gln-|-Gly bond in the poliovirus polyprotein. In other picornavirus reactions Glu may be substituted for Gln, and Ser or Thr for Gly.. Functionally, capsid proteins VP1, VP2, and VP3 form a closed capsid enclosing the viral positive strand RNA genome. All these proteins contain a beta-sheet structure called beta-barrel jelly roll. Together they form an icosahedral capsid (T=3) composed of 60 copies of each VP1, VP2, and VP3, with a diameter of approximately 300 Angstroms. VP1 is situated at the 12 fivefold axes, whereas VP2 and VP3 are located at the quasi-sixfold axes. The naked capsid interacts with the host receptor HAVCR1 to provide virion attachment to and probably entry into the target cell. Its function is as follows. VP0 precursor is a component of the immature procapsids. In terms of biological role, plays a role in the assembly of the 12 pentamers into an icosahedral structure. Has not been detected in mature virions, supposedly owing to its small size. Precursor component of immature procapsids that corresponds to an extended form of the structural protein VP1. After maturation, possibly by the host Cathepsin L, the assembly signal 2A is cleaved to give rise to the mature VP1 protein. Functionally, functions as a viroporin. Affects membrane integrity and causes an increase in membrane permeability. Involved in host intracellular membrane rearrangements probably to give rise to the viral factories. Does not disrupt calcium homeostasis or glycoprotein trafficking. Antagonizes the innate immune response of the host by suppressing IFN-beta synthesis, which it achieves by interfering with the RIG-I/IFIH1 pathway. Its function is as follows. Affects membrane integrity and causes an increase in membrane permeability. In terms of biological role, associates with and induces structural rearrangements of intracellular membranes. Displays RNA-binding activity. The precursor 3ABC is targeted to the mitochondrial membrane where protease 3C activity cleaves and inhibits the host antiviral protein MAVS, thereby disrupting activation of IRF3 through the IFIH1/MDA5 pathway. In vivo, the protease activity of 3ABC precursor is more efficient in cleaving the 2BC precursor than that of protein 3C. The 3ABC precursor may therefore play a role in the proteolytic processing of the polyprotein. Possible viroporin. Functionally, interacts with the 3CD precursor and with RNA structures found at both the 5'- and 3'-termini of the viral genome. Since the 3AB precursor contains the hydrophobic domain 3A, it probably anchors the whole viral replicase complex to intracellular membranes on which viral RNA synthesis occurs. Its function is as follows. May serve as membrane anchor to the 3AB and 3ABC precursors via its hydrophobic domain. May interact with RNA. In terms of biological role, acts as a primer for viral RNA replication and remains covalently bound to viral genomic RNA. VPg is uridylylated prior to priming replication into VPg-pUpU. The VPg-pUpU is then used as primer on the genomic RNA poly(A) by the RNA-dependent RNA polymerase to replicate the viral genome. Cysteine protease that generates mature viral proteins from the precursor polyprotein. In addition to its proteolytic activity, it binds to viral RNA, and thus influences viral genome replication. RNA and substrate bind cooperatively to the protease. Cleaves IKBKG/NEMO to impair innate immune signaling. Cleaves host PABPC1 which may participate in the switch of viral translation to RNA synthesis. Functionally, interacts with the 3AB precursor and with RNA structures found at both the 5'- and 3'-termini of the viral genome. Disrupts TLR3 signaling by degrading the host adapter protein TICAM1/TRIF. Its function is as follows. RNA-directed RNA polymerase 3D-POL replicates genomic and antigenomic RNA by recognizing replications specific signals. The chain is Genome polyprotein from Human hepatitis A virus genotype IIB (isolate SLF88) (HHAV).